A 356-amino-acid chain; its full sequence is MKRELLLEKIEEYKSLMPWFVLEYYQSKLSVPYSFTTLYEYLKEYKRFFNWLIDSGISDADDIASIHIKTLENLTKKDMESFVLYLRERPSLNTYSKKQGVSQTTINRTLSALSSLYKYLTEEVEGPDGEPYFYRNVMKKISTKKKKETLAARAENIKQKLFLGDETMKFLDYVENEYEVKLSNRAKSSFYKNKERDLAIIALLLSSGVRLSEAVNLDLKDINLKRMVIDVTRKGGQRDSVNMASFARPYLENYLSIRNKRYKAEKQDVALFLTEYRGVPNRIDASSIEKMVAKYSQDFKIRVTPHKLRHTLATRLYDATKSQVLVSHQLGHASTQVTDLYTHIVNDEQKNALDNL.

The Core-binding (CB) domain occupies 16–121; the sequence is LMPWFVLEYY…ALSSLYKYLT (106 aa). Residues 169 to 354 form the Tyr recombinase domain; the sequence is KFLDYVENEY…VNDEQKNALD (186 aa). Catalysis depends on residues Arg210, Lys234, His306, Arg309, and His332. The O-(3'-phospho-DNA)-tyrosine intermediate role is filled by Tyr341.

Belongs to the 'phage' integrase family. XerS subfamily.

The protein resides in the cytoplasm. Its activity is regulated as follows. FtsK is required for recombination. Its function is as follows. Site-specific tyrosine recombinase, which acts by catalyzing the cutting and rejoining of the recombining DNA molecules. Essential to convert dimers of the bacterial chromosome into monomers to permit their segregation at cell division. The polypeptide is Tyrosine recombinase XerS (Streptococcus thermophilus (strain CNRZ 1066)).